We begin with the raw amino-acid sequence, 248 residues long: MFLTRSEYDRGVNTFSPEGRLFQVEYAIEAVKLGSTSIGIKTSEGVLLAAEKRSTSKLMVNDAIEKISKVDQHIGVTFAGLIADSRTLVERAQIEAQNFWFTYNRKIRVEDVTQSVANLALQFGDDDVKASMSRPFGVAMLFAGVDQEGAKLFHLDPSGTFIDCKAKSIGAASDGAEQNLKEQYHDALTIKEGLKMALAILKQVMEEKLNSANVEVVVIKPTVDAKGRPIGEFTRVSNEELDQVITSL.

This sequence belongs to the peptidase T1A family. The 26S proteasome consists of a 20S proteasome core and two 19S regulatory subunits. The 20S proteasome core is composed of 28 subunits that are arranged in four stacked rings, resulting in a barrel-shaped structure. The two end rings are each formed by seven alpha subunits, and the two central rings are each formed by seven beta subunits. The catalytic chamber with the active sites is on the inside of the barrel.

The protein resides in the cytoplasm. Its subcellular location is the nucleus. In terms of biological role, the proteasome is a multicatalytic proteinase complex which is characterized by its ability to cleave peptides with Arg, Phe, Tyr, Leu, and Glu adjacent to the leaving group at neutral or slightly basic pH. The proteasome has an ATP-dependent proteolytic activity. The sequence is that of Proteasome subunit alpha type-5 (pas-5) from Caenorhabditis elegans.